A 207-amino-acid polypeptide reads, in one-letter code: Small ribosomal subunit protein uS4 (207 aa).

The segment at 30–51 (DKSKFDSKPGQHGRTSGARTSD) is disordered. The region spanning 97-157 (SRLDNVVYRM…EKSKKQGRIA (61 aa)) is the S4 RNA-binding domain.

The protein belongs to the universal ribosomal protein uS4 family. In terms of assembly, part of the 30S ribosomal subunit. Contacts protein S5. The interaction surface between S4 and S5 is involved in control of translational fidelity.

In terms of biological role, one of the primary rRNA binding proteins, it binds directly to 16S rRNA where it nucleates assembly of the body of the 30S subunit. With S5 and S12 plays an important role in translational accuracy. This is Small ribosomal subunit protein uS4 from Verminephrobacter eiseniae (strain EF01-2).